Reading from the N-terminus, the 509-residue chain is Maturase K (509 aa).

It belongs to the intron maturase 2 family. MatK subfamily.

The protein localises to the plastid. It is found in the chloroplast. In terms of biological role, usually encoded in the trnK tRNA gene intron. Probably assists in splicing its own and other chloroplast group II introns. The chain is Maturase K from Drimys granadensis.